We begin with the raw amino-acid sequence, 210 residues long: Acetoin utilization protein AcuA (210 aa).

Residues 20 to 161 enclose the N-acetyltransferase domain; it reads LIEGPVSPED…YRKIMEKMMN (142 aa).

This sequence belongs to the acetyltransferase family. Monomer.

The protein operates within ketone degradation; acetoin degradation. With respect to regulation, activity is sensitive to salt concentration, a high concentration of KCL (500 mM) is needed for complete inactivation. Its function is as follows. Part of the acuABC operon, which is possibly involved in the breakdown of acetoin and butanediol. Acts as an acetyltransferase inactivating acetyl-CoA synthetase AcsA via acetylation at a Lys residue. In Bacillus subtilis (strain 168), this protein is Acetoin utilization protein AcuA (acuA).